The chain runs to 90 residues: UPF0223 protein SH1855 (90 aa).

Belongs to the UPF0223 family.

This Staphylococcus haemolyticus (strain JCSC1435) protein is UPF0223 protein SH1855.